Consider the following 327-residue polypeptide: BarH-like 1 homeobox protein (327 aa).

3 disordered regions span residues 1-90, 112-184, and 305-327; these read MEGS…AQSR, APYS…ARTA, and GASEPPPPLPPLAGVLPRAAQPR. Residues 33–54 are compositionally biased toward low complexity; the sequence is RSPLELSPRSESSSDCSSPASP. Positions 79-90 are enriched in polar residues; it reads QPGQLSAPAQSR. 2 stretches are compositionally biased toward basic and acidic residues: residues 133–143 and 152–166; these read AAEDFRDKLDK and SEYKVKEEGDREISS. The segment at residues 178–237 is a DNA-binding region (homeobox); it reads PRKARTAFTDHQLAQLERSFERQKYLSVQDRMELAASLNLTDTQVKTWYQNRRTKWKRQT. Low complexity predominate over residues 316–327; it reads LAGVLPRAAQPR.

It belongs to the BAR homeobox family.

The protein localises to the nucleus. This is BarH-like 1 homeobox protein (BARHL1) from Homo sapiens (Human).